The following is a 339-amino-acid chain: Starvation-sensing protein RspB (339 aa).

Cys37, His59, Cys89, Cys92, Cys95, Cys103, and Glu144 together coordinate Zn(2+).

This sequence belongs to the zinc-containing alcohol dehydrogenase family. The cofactor is Zn(2+).

Functionally, not known; probable catabolic enzyme. The chain is Starvation-sensing protein RspB from Escherichia coli (strain K12).